An 899-amino-acid chain; its full sequence is AP-3 complex subunit delta (899 aa).

12 HEAT repeats span residues 37 to 74 (QSPE…KLTY), 155 to 192 (ELAR…QYPE), 194 to 229 (LRDN…HNPQ), 231 to 267 (FIQL…IEPK), 268 to 305 (LRVK…LNSD), 308 to 344 (DSAV…KINT), 345 to 382 (DFIA…EDNL), 384 to 428 (DFVQ…ITAM), 480 to 518 (RTLA…LLDN), 536 to 580 (ELQQ…LIIS), 590 to 613 (SEAL…SLPL), and 614 to 656 (LLTE…TESE). Disordered stretches follow at residues 668–701 (DGIV…PTHE), 741–768 (NLSN…KKKK), 782–801 (GVNT…SARN), and 849–899 (AAEE…LTTE). Positions 743–759 (SNSKPSSSGSLVRLSSE) are enriched in low complexity. The stretch at 841–862 (QRLLDESAAAEEEVVVVKKKKR) forms a coiled coil. Basic residues predominate over residues 857–880 (VKKKKRSKDGSKSSKKKSRSKSKP).

This sequence belongs to the adaptor complexes large subunit family. As to quaternary structure, adaptor protein complex 3 (AP-3) is a heterotetramer composed of 2 large adaptins (APL5 and APL6), a medium adaptin (APM3) and a small adaptin (APS3).

It is found in the golgi apparatus. The protein localises to the cytoplasmic vesicle. It localises to the clathrin-coated vesicle membrane. Part of the AP-3 complex, an adaptor-related complex which is not clathrin-associated. The complex is associated with the Golgi region as well as more peripheral structures. It facilitates the budding of vesicles from the Golgi membrane and may be directly involved in trafficking to the vacuole. This is AP-3 complex subunit delta (APL5) from Eremothecium gossypii (strain ATCC 10895 / CBS 109.51 / FGSC 9923 / NRRL Y-1056) (Yeast).